The sequence spans 374 residues: Putative glutamate--cysteine ligase 2 (374 aa).

It belongs to the glutamate--cysteine ligase type 2 family. YbdK subfamily.

It catalyses the reaction L-cysteine + L-glutamate + ATP = gamma-L-glutamyl-L-cysteine + ADP + phosphate + H(+). Functionally, ATP-dependent carboxylate-amine ligase which exhibits weak glutamate--cysteine ligase activity. The sequence is that of Putative glutamate--cysteine ligase 2 from Paracidovorax citrulli (strain AAC00-1) (Acidovorax citrulli).